The chain runs to 284 residues: MLTLLAPAKVNLSLEVLYRRKDGYHELRSIIQSLSLCDRLSFSPSKTVHISSDSQDWQADLSLVSKAVELFSERCGQNTGVNLKIAKRIPLVSGLGGDSSCAAAVLKGLNKLWGCGYPCWRLMEIGAELGSDVPFFIMGGTAMMEGRGETVTPLPTLTQMWAVLLVPALDMPADKTAALYRNLRPDSFTSGEISDKLLESICQGKLSLSLCFNAFEKVAFELFPELVKYRWQFLEAGAYQISLAGAGPTLFTLLKDKNTAEKIYHNLCQKGHQAYLVSTLGPLD.

Lys-9 is a catalytic residue. Position 90-100 (90-100 (PLVSGLGGDSS)) interacts with ATP. Asp-132 is an active-site residue.

It belongs to the GHMP kinase family. IspE subfamily.

The catalysed reaction is 4-CDP-2-C-methyl-D-erythritol + ATP = 4-CDP-2-C-methyl-D-erythritol 2-phosphate + ADP + H(+). It participates in isoprenoid biosynthesis; isopentenyl diphosphate biosynthesis via DXP pathway; isopentenyl diphosphate from 1-deoxy-D-xylulose 5-phosphate: step 3/6. Its function is as follows. Catalyzes the phosphorylation of the position 2 hydroxy group of 4-diphosphocytidyl-2C-methyl-D-erythritol. This chain is 4-diphosphocytidyl-2-C-methyl-D-erythritol kinase, found in Dehalococcoides mccartyi (strain ATCC BAA-2100 / JCM 16839 / KCTC 5957 / BAV1).